The chain runs to 474 residues: PRAME family member 14 (474 aa).

LRR repeat units follow at residues 15-38, 204-229, 271-294, 319-342, and 391-414; these read QSLL…LYLP, LNSI…CYLK, LLKI…LQNP, LGYL…PLGA, and MGAL…TYPA.

This sequence belongs to the PRAME family.

In Homo sapiens (Human), this protein is PRAME family member 14.